The primary structure comprises 200 residues: Phospholipase A2 inhibitor gamma subunit B (200 aa).

The N-terminal stretch at M1–C19 is a signal peptide. 8 disulfides stabilise this stretch: C22–C46, C25–C32, C39–C67, C73–C94, C95–C100, C120–C145, C138–C165, and C171–C191. N31 is a glycosylation site (N-linked (GlcNAc...) asparagine).

The protein belongs to the CNF-like-inhibitor family. In terms of assembly, heterodimer of subunit A and subunit B. N-glycosylated. Expressed by the liver. Not expressed in esophagus, stomach, pancreas, spleen, gall bladder, small intestine, rectum, kidney, trachea, lung, testis and body fat.

The protein localises to the secreted. Its function is as follows. Inhibits the enzymatic activity of phospholipase A2 (PA2). This chain is Phospholipase A2 inhibitor gamma subunit B, found in Elaphe quadrivirgata (Japanese four-lined ratsnake).